We begin with the raw amino-acid sequence, 408 residues long: Histidine--tRNA ligase (408 aa).

The protein belongs to the class-II aminoacyl-tRNA synthetase family. In terms of assembly, homodimer.

The protein resides in the cytoplasm. It catalyses the reaction tRNA(His) + L-histidine + ATP = L-histidyl-tRNA(His) + AMP + diphosphate + H(+). This Campylobacter jejuni subsp. jejuni serotype O:2 (strain ATCC 700819 / NCTC 11168) protein is Histidine--tRNA ligase.